We begin with the raw amino-acid sequence, 900 residues long: Alanine--tRNA ligase (900 aa).

Zn(2+) contacts are provided by H587, H591, C691, and H695.

The protein belongs to the class-II aminoacyl-tRNA synthetase family. Zn(2+) is required as a cofactor.

It is found in the cytoplasm. The catalysed reaction is tRNA(Ala) + L-alanine + ATP = L-alanyl-tRNA(Ala) + AMP + diphosphate. Its function is as follows. Catalyzes the attachment of alanine to tRNA(Ala) in a two-step reaction: alanine is first activated by ATP to form Ala-AMP and then transferred to the acceptor end of tRNA(Ala). Also edits incorrectly charged Ser-tRNA(Ala) and Gly-tRNA(Ala) via its editing domain. In Aeropyrum pernix (strain ATCC 700893 / DSM 11879 / JCM 9820 / NBRC 100138 / K1), this protein is Alanine--tRNA ligase.